The chain runs to 115 residues: Large ribosomal subunit protein bL20 (115 aa).

It belongs to the bacterial ribosomal protein bL20 family.

Functionally, binds directly to 23S ribosomal RNA and is necessary for the in vitro assembly process of the 50S ribosomal subunit. It is not involved in the protein synthesizing functions of that subunit. The chain is Large ribosomal subunit protein bL20 from Chlorobaculum tepidum (strain ATCC 49652 / DSM 12025 / NBRC 103806 / TLS) (Chlorobium tepidum).